The chain runs to 1394 residues: MEVLMAERADLVFHNKVIDGTAIKRLISRLIDHFGMAYTSHILDQLKTLGFQQATATSISLGIDDLLTIPSKGWLVQDAEQQSLILEKHHHYGNVHAVEKLRQSIEIWYATSEYLRQEMNPNFRMTDPFNPVHIMSFSGARGNASQVHQLVGMRGLMSDPQGQMIDLPIQSNLREGLSLTEYIISCYGARKGVVDTAVRTSDAGYLTRRLVEVVQHIVVRRTDCGTIRGILVSPGNRMIPERIFIQTLIGRVLADDIYMGPRCIGVRNQDIGIGLINRFITFQTQPISIRTPFTCRSTSWICRLCYGRSPTHGDLVELGEAVGIIAGQSIGEPGTQLTLRTFHTGGVFTGGTAEHIRAPSNGKIKFNEDLVHPTRTRHGHPAFLCYIDLYVTIESEDIIHNVTIPPKSLLLVQNDQYVESEQVIAEIRAGTYTLNLKERVRKHIYSDSEGEMHWSTDVYHAPEFTYSNVHLLPKTSHLWILSGGSCGCSLVPFSLYKDQDQINVHSLCVERRYISSLSVNNDKVGQKFYGPDLSGKNENGIPDYSELNPILCTGQSNLTYPAIFHGNSDLLAKRRRNGFIIQFESLQEREKELRPPSGISIEIPINGIFRRNSILAFFDDPQYRRNSSGITKYGTIGVHSILKKEDLIEYRGVKDFKPKYQMQMKVDRFFFIPEEVHILPESSSIMVRNNSIIGVATRLTLSIRSRVGGLVRVEKKKKRIELKIFSGDIHFPGEMDKISRHNGILIPPERVKKNSKKSKKSKNWIYVQWITPTKKKYFVFVRPVIIYELADGINLVKLFPQDLLQERDNLELRVANYILYGNGKPIRGISGTSIQLVRTCLLLNWDRDKKSSSIEDARASFVEVSTNGLVRNFLRIDLGKSDTAYIRKRKDPSGSGLIFNNESDRTNINPFFSIYSKTRVPQSPSQNQGTIRTLLNRNKERQSLIILSASNCLQIDLFNDVKDYNVIKESSKKDPLISIRNSLGPLGAAPQIVNFYSFYYLITHNPISLTKYLQLDNLKQIFQVLKYYLMDENGGILNSDPCINIVFNTFNLNWHFLHDNYHNNYCEETPTRISLGQFFFENVCIAKNRPHLKSGQIIIVQVDSLVIRSAKPYLATSGATVHRHYGEILYEGDTLVTFIYEKSRSGDITQGLPKVEQVLEVRSIDSISMSLEKRIEGWNERITRILGIPWGFLIGAELTIVQSRISLVNKIQKVYRSQGVEIHNRHIEIIVRQITSKVLVSEDGMSNVFSPGELIGLLRAERTGRALEEAICYRAVLLGITKASLNTQSFISEASFQETARVLAKAALRGRIDWLRGLKENVVLGGMIPVGTGFRELAHRSRQHNNIPLETPPKKIFEGEMRDILFHHKELFDFFISTNLHDTSEQEFLGFNDS.

The Zn(2+) site is built by C224, C295, C302, and C305.

Belongs to the RNA polymerase beta' chain family. RpoC2 subfamily. In terms of assembly, in plastids the minimal PEP RNA polymerase catalytic core is composed of four subunits: alpha, beta, beta', and beta''. When a (nuclear-encoded) sigma factor is associated with the core the holoenzyme is formed, which can initiate transcription. Zn(2+) serves as cofactor.

The protein resides in the plastid. The protein localises to the chloroplast. It carries out the reaction RNA(n) + a ribonucleoside 5'-triphosphate = RNA(n+1) + diphosphate. In terms of biological role, DNA-dependent RNA polymerase catalyzes the transcription of DNA into RNA using the four ribonucleoside triphosphates as substrates. The polypeptide is DNA-directed RNA polymerase subunit beta'' (Cucumis sativus (Cucumber)).